A 229-amino-acid polypeptide reads, in one-letter code: Large ribosomal subunit protein uL1 (229 aa).

Belongs to the universal ribosomal protein uL1 family. Part of the 50S ribosomal subunit.

Binds directly to 23S rRNA. The L1 stalk is quite mobile in the ribosome, and is involved in E site tRNA release. In terms of biological role, protein L1 is also a translational repressor protein, it controls the translation of the L11 operon by binding to its mRNA. This chain is Large ribosomal subunit protein uL1, found in Flavobacterium johnsoniae (strain ATCC 17061 / DSM 2064 / JCM 8514 / BCRC 14874 / CCUG 350202 / NBRC 14942 / NCIMB 11054 / UW101) (Cytophaga johnsonae).